The following is a 143-amino-acid chain: Putative RNA polymerase II subunit B1 CTD phosphatase RPAP2 homolog (143 aa).

Residues 46–129 form an RTR1-type zinc finger; sequence SLLCEIGPPN…VPTSPLWLRD (84 aa). Cys-69, Cys-74, Cys-105, and Cys-109 together coordinate Zn(2+).

This sequence belongs to the RPAP2 family.

The protein localises to the nucleus. It carries out the reaction O-phospho-L-seryl-[protein] + H2O = L-seryl-[protein] + phosphate. The catalysed reaction is O-phospho-L-threonyl-[protein] + H2O = L-threonyl-[protein] + phosphate. In terms of biological role, putative RNA polymerase II subunit B1 C-terminal domain (CTD) phosphatase involved in RNA polymerase II transcription regulation. The sequence is that of Putative RNA polymerase II subunit B1 CTD phosphatase RPAP2 homolog from Drosophila melanogaster (Fruit fly).